The primary structure comprises 226 residues: Cytidylate kinase (226 aa).

An ATP-binding site is contributed by G10 to T18.

Belongs to the cytidylate kinase family. Type 1 subfamily.

Its subcellular location is the cytoplasm. The catalysed reaction is CMP + ATP = CDP + ADP. It catalyses the reaction dCMP + ATP = dCDP + ADP. This chain is Cytidylate kinase, found in Streptococcus pyogenes serotype M4 (strain MGAS10750).